Here is a 259-residue protein sequence, read N- to C-terminus: 3-methyl-2-oxobutanoate hydroxymethyltransferase (259 aa).

Asp-44 and Asp-83 together coordinate Mg(2+). 3-methyl-2-oxobutanoate contacts are provided by residues 44 to 45, Asp-83, and Lys-113; that span reads DS. Glu-115 lines the Mg(2+) pocket. Residue Glu-183 is the Proton acceptor of the active site.

This sequence belongs to the PanB family. In terms of assembly, homodecamer; pentamer of dimers. It depends on Mg(2+) as a cofactor.

The protein localises to the cytoplasm. The enzyme catalyses 3-methyl-2-oxobutanoate + (6R)-5,10-methylene-5,6,7,8-tetrahydrofolate + H2O = 2-dehydropantoate + (6S)-5,6,7,8-tetrahydrofolate. It functions in the pathway cofactor biosynthesis; (R)-pantothenate biosynthesis; (R)-pantoate from 3-methyl-2-oxobutanoate: step 1/2. Functionally, catalyzes the reversible reaction in which hydroxymethyl group from 5,10-methylenetetrahydrofolate is transferred onto alpha-ketoisovalerate to form ketopantoate. In Acaryochloris marina (strain MBIC 11017), this protein is 3-methyl-2-oxobutanoate hydroxymethyltransferase.